The sequence spans 363 residues: UDP-N-acetylglucosamine--N-acetylmuramyl-(pentapeptide) pyrophosphoryl-undecaprenol N-acetylglucosamine transferase (363 aa).

UDP-N-acetyl-alpha-D-glucosamine contacts are provided by residues T15–G17, N127, R169, S197, I251, A270–E275, and Q296.

This sequence belongs to the glycosyltransferase 28 family. MurG subfamily.

It localises to the cell inner membrane. It catalyses the reaction di-trans,octa-cis-undecaprenyl diphospho-N-acetyl-alpha-D-muramoyl-L-alanyl-D-glutamyl-meso-2,6-diaminopimeloyl-D-alanyl-D-alanine + UDP-N-acetyl-alpha-D-glucosamine = di-trans,octa-cis-undecaprenyl diphospho-[N-acetyl-alpha-D-glucosaminyl-(1-&gt;4)]-N-acetyl-alpha-D-muramoyl-L-alanyl-D-glutamyl-meso-2,6-diaminopimeloyl-D-alanyl-D-alanine + UDP + H(+). Its pathway is cell wall biogenesis; peptidoglycan biosynthesis. In terms of biological role, cell wall formation. Catalyzes the transfer of a GlcNAc subunit on undecaprenyl-pyrophosphoryl-MurNAc-pentapeptide (lipid intermediate I) to form undecaprenyl-pyrophosphoryl-MurNAc-(pentapeptide)GlcNAc (lipid intermediate II). This chain is UDP-N-acetylglucosamine--N-acetylmuramyl-(pentapeptide) pyrophosphoryl-undecaprenol N-acetylglucosamine transferase, found in Dichelobacter nodosus (strain VCS1703A).